The sequence spans 199 residues: UPF0637 protein YsbB (199 aa).

It belongs to the UPF0637 family.

The polypeptide is UPF0637 protein YsbB (ysbB) (Lactococcus lactis subsp. lactis (strain IL1403) (Streptococcus lactis)).